The sequence spans 1070 residues: DNA-directed RNA polymerase subunit beta (1070 aa).

Belongs to the RNA polymerase beta chain family. In plastids the minimal PEP RNA polymerase catalytic core is composed of four subunits: alpha, beta, beta', and beta''. When a (nuclear-encoded) sigma factor is associated with the core the holoenzyme is formed, which can initiate transcription.

Its subcellular location is the plastid. The protein localises to the chloroplast. The catalysed reaction is RNA(n) + a ribonucleoside 5'-triphosphate = RNA(n+1) + diphosphate. DNA-dependent RNA polymerase catalyzes the transcription of DNA into RNA using the four ribonucleoside triphosphates as substrates. This chain is DNA-directed RNA polymerase subunit beta, found in Angiopteris evecta (Mule's foot fern).